The sequence spans 167 residues: Small ribosomal subunit protein uS5 (167 aa).

Residues 12–75 (LQEKLIAVNR…EKARRNMTTI (64 aa)) form the S5 DRBM domain.

Belongs to the universal ribosomal protein uS5 family. As to quaternary structure, part of the 30S ribosomal subunit. Contacts proteins S4 and S8.

Functionally, with S4 and S12 plays an important role in translational accuracy. In terms of biological role, located at the back of the 30S subunit body where it stabilizes the conformation of the head with respect to the body. The chain is Small ribosomal subunit protein uS5 from Vibrio parahaemolyticus serotype O3:K6 (strain RIMD 2210633).